The primary structure comprises 192 residues: MKRYVVGISGASGIVLAVTLVSELARLGHHIDVIISPSAQKTLYYELDTKSFLSTIPQNFHNQIVLHHISSIESSVSSGSNTIDATIIVPCSVATVAAISCGLADNLLRRVADVALKEKRPLILVPREAPLSAIHLENLLKLAQNGAVILPPMPIWYFKPQTAEDIANDIVGKILAILQLDSPLIKRWENPR.

FMN is bound by residues 10–12, S36, 92–95, and R127; these read GAS and SVAT. 2 residues coordinate dimethylallyl phosphate: Y157 and K173.

Belongs to the UbiX/PAD1 family.

It carries out the reaction dimethylallyl phosphate + FMNH2 = prenylated FMNH2 + phosphate. Its function is as follows. Flavin prenyltransferase that catalyzes the synthesis of the prenylated FMN cofactor (prenyl-FMN) for 4-hydroxy-3-polyprenylbenzoic acid decarboxylase UbiD. The prenyltransferase is metal-independent and links a dimethylallyl moiety from dimethylallyl monophosphate (DMAP) to the flavin N5 and C6 atoms of FMN. This is Flavin prenyltransferase UbiX from Chlamydia trachomatis serovar D (strain ATCC VR-885 / DSM 19411 / UW-3/Cx).